The sequence spans 669 residues: DNA ligase (669 aa).

NAD(+)-binding positions include 33–37 (DLTYD), 82–83 (SL), and Glu115. Lys117 acts as the N6-AMP-lysine intermediate in catalysis. Residues Arg138, Glu172, Lys286, and Lys310 each contribute to the NAD(+) site. Positions 401, 404, 417, and 422 each coordinate Zn(2+).

Belongs to the NAD-dependent DNA ligase family. LigA subfamily. Mg(2+) is required as a cofactor. It depends on Mn(2+) as a cofactor.

The catalysed reaction is NAD(+) + (deoxyribonucleotide)n-3'-hydroxyl + 5'-phospho-(deoxyribonucleotide)m = (deoxyribonucleotide)n+m + AMP + beta-nicotinamide D-nucleotide.. Its function is as follows. DNA ligase that catalyzes the formation of phosphodiester linkages between 5'-phosphoryl and 3'-hydroxyl groups in double-stranded DNA using NAD as a coenzyme and as the energy source for the reaction. It is essential for DNA replication and repair of damaged DNA. In Borrelia hermsii (strain HS1 / DAH), this protein is DNA ligase.